The primary structure comprises 66 residues: Large ribosomal subunit protein bL33c (66 aa).

Component of the chloroplast large ribosomal subunit (LSU). Mature 70S chloroplast ribosomes of higher plants consist of a small (30S) and a large (50S) subunit. The 30S small subunit contains 1 molecule of ribosomal RNA (16S rRNA) and 24 different proteins. The 50S large subunit contains 3 rRNA molecules (23S, 5S and 4.5S rRNA) and 33 different proteins.

Its subcellular location is the plastid. It localises to the chloroplast. In terms of biological role, component of the chloroplast ribosome (chloro-ribosome), a dedicated translation machinery responsible for the synthesis of chloroplast genome-encoded proteins, including proteins of the transcription and translation machinery and components of the photosynthetic apparatus. The sequence is that of Large ribosomal subunit protein bL33c (rpl33) from Spinacia oleracea (Spinach).